The primary structure comprises 472 residues: Meiotic spindle formation protein mei-1 (472 aa).

The segment at 83-161 (HEAMTRQSGS…TQGILPQNSA (79 aa)) is disordered. Ser92 bears the Phosphoserine; by mbk-2 mark. 2 stretches are compositionally biased toward polar residues: residues 134 to 143 (KSTSSMSTNP) and 150 to 161 (NPTQGILPQNSA). Residues 233–240 (GPPGTGKT) and 351–352 (RR) contribute to the ATP site.

It belongs to the AAA ATPase family. Katanin p60 subunit A1 subfamily. As to quaternary structure, homohexamer; ATP hydrolysis initiates a cycle between an open spiral and a closed ring conformation which is probably involved in pulling tubulin dimers out from microtubules. Interacts with mei-2, which may serve as a targeting subunit. Interacts with mel-26, which targets mei-1 for ubiquitin mediated proteolysis. Interacts with phosphatase pph-4.1. Post-translationally, phosphorylated. Phosphorylation by mbk-2 is required for its rapid degradation following meiosis II. Likely dephosphorylated by the PP4 complex composed of catalytic subunit pph-4.1 and regulatory subunit ppfr-1. Polyubiquitination targets the protein for rapid degradation via the ubiquitin system at the end of meiosis. The BTB domain protein mel-26 may serve to specifically target mei-1 for ubiquitination by cul-3 containing complexes. The cul-3 protein is in turn regulated by neddylation by ned-8.

It is found in the cytoplasm. It localises to the cytoskeleton. Its subcellular location is the spindle pole. The protein resides in the chromosome. The enzyme catalyses n ATP + n H2O + a microtubule = n ADP + n phosphate + (n+1) alpha/beta tubulin heterodimers.. With respect to regulation, ATPase activity is stimulated by microtubules, which promote homooligomerization. ATP-dependent microtubule severing is stimulated by interaction with mei-2. Catalytic subunit of a complex which severs microtubules in an ATP-dependent manner. Microtubule severing may promote rapid reorganization of cellular microtubule arrays. Required specifically for meiotic spindle formation in the female germline; the presence of this protein is inimical to the formation of mitotic spindles. In body wall muscles, regulates organization of myosin thick filaments. This Caenorhabditis elegans protein is Meiotic spindle formation protein mei-1.